A 154-amino-acid chain; its full sequence is 6,7-dimethyl-8-ribityllumazine synthase (154 aa).

Residues Trp22, 56-58 (AWE), and 80-82 (CVV) each bind 5-amino-6-(D-ribitylamino)uracil. 85–86 (DT) provides a ligand contact to (2S)-2-hydroxy-3-oxobutyl phosphate. Residue His88 is the Proton donor of the active site. Asn113 is a binding site for 5-amino-6-(D-ribitylamino)uracil. Arg127 serves as a coordination point for (2S)-2-hydroxy-3-oxobutyl phosphate.

Belongs to the DMRL synthase family. In terms of assembly, forms an icosahedral capsid composed of 60 subunits, arranged as a dodecamer of pentamers.

It catalyses the reaction (2S)-2-hydroxy-3-oxobutyl phosphate + 5-amino-6-(D-ribitylamino)uracil = 6,7-dimethyl-8-(1-D-ribityl)lumazine + phosphate + 2 H2O + H(+). The protein operates within cofactor biosynthesis; riboflavin biosynthesis; riboflavin from 2-hydroxy-3-oxobutyl phosphate and 5-amino-6-(D-ribitylamino)uracil: step 1/2. In terms of biological role, catalyzes the formation of 6,7-dimethyl-8-ribityllumazine by condensation of 5-amino-6-(D-ribitylamino)uracil with 3,4-dihydroxy-2-butanone 4-phosphate. This is the penultimate step in the biosynthesis of riboflavin. In Xylella fastidiosa (strain M23), this protein is 6,7-dimethyl-8-ribityllumazine synthase.